Consider the following 301-residue polypeptide: Probable alpha-L-glutamate ligase (301 aa).

The ATP-grasp domain occupies L104–E287. Residues K141, E178 to Y179, D187, and R211 to N213 each bind ATP. 3 residues coordinate Mg(2+): D248, E260, and N262. Residues D248, E260, and N262 each contribute to the Mn(2+) site.

It belongs to the RimK family. Requires Mg(2+) as cofactor. Mn(2+) serves as cofactor.

The sequence is that of Probable alpha-L-glutamate ligase from Pseudomonas putida (strain ATCC 700007 / DSM 6899 / JCM 31910 / BCRC 17059 / LMG 24140 / F1).